A 245-amino-acid polypeptide reads, in one-letter code: 4-hydroxy-tetrahydrodipicolinate reductase (245 aa).

NAD(+) contacts are provided by residues G7–V12, G75–T77, and A102–F105. Catalysis depends on H132, which acts as the Proton donor/acceptor. H133 lines the (S)-2,3,4,5-tetrahydrodipicolinate pocket. K136 serves as the catalytic Proton donor. G142–T143 lines the (S)-2,3,4,5-tetrahydrodipicolinate pocket.

It belongs to the DapB family.

It is found in the cytoplasm. It catalyses the reaction (S)-2,3,4,5-tetrahydrodipicolinate + NAD(+) + H2O = (2S,4S)-4-hydroxy-2,3,4,5-tetrahydrodipicolinate + NADH + H(+). It carries out the reaction (S)-2,3,4,5-tetrahydrodipicolinate + NADP(+) + H2O = (2S,4S)-4-hydroxy-2,3,4,5-tetrahydrodipicolinate + NADPH + H(+). Its pathway is amino-acid biosynthesis; L-lysine biosynthesis via DAP pathway; (S)-tetrahydrodipicolinate from L-aspartate: step 4/4. In terms of biological role, catalyzes the conversion of 4-hydroxy-tetrahydrodipicolinate (HTPA) to tetrahydrodipicolinate. The chain is 4-hydroxy-tetrahydrodipicolinate reductase from Mycobacterium marinum (strain ATCC BAA-535 / M).